We begin with the raw amino-acid sequence, 362 residues long: HMG box-containing protein C19G7.04 (362 aa).

The SprT-like domain maps to 135-299; that stretch reads KCFLARLEDE…RLCKSQIKQI (165 aa). The segment at residues 306-348 is a DNA-binding region (HMG box); it reads PNAFQIFLKENSKRLRKLHPHITHKELMKKLSDEYHRTKDAKQ.

It localises to the nucleus. It is found in the cytoplasm. Its subcellular location is the cytoskeleton. The protein localises to the spindle. The chain is HMG box-containing protein C19G7.04 from Schizosaccharomyces pombe (strain 972 / ATCC 24843) (Fission yeast).